A 563-amino-acid polypeptide reads, in one-letter code: Dihydroxy-acid dehydratase (563 aa).

Cys50 contributes to the [2Fe-2S] cluster binding site. Asp82 contributes to the Mg(2+) binding site. Cys123 provides a ligand contact to [2Fe-2S] cluster. 2 residues coordinate Mg(2+): Asp124 and Lys125. Lys125 is subject to N6-carboxylysine. Cys195 contributes to the [2Fe-2S] cluster binding site. Glu447 is a binding site for Mg(2+). Residue Ser473 is the Proton acceptor of the active site.

It belongs to the IlvD/Edd family. In terms of assembly, homodimer. The cofactor is [2Fe-2S] cluster. It depends on Mg(2+) as a cofactor.

It carries out the reaction (2R)-2,3-dihydroxy-3-methylbutanoate = 3-methyl-2-oxobutanoate + H2O. The catalysed reaction is (2R,3R)-2,3-dihydroxy-3-methylpentanoate = (S)-3-methyl-2-oxopentanoate + H2O. Its pathway is amino-acid biosynthesis; L-isoleucine biosynthesis; L-isoleucine from 2-oxobutanoate: step 3/4. It functions in the pathway amino-acid biosynthesis; L-valine biosynthesis; L-valine from pyruvate: step 3/4. Its function is as follows. Functions in the biosynthesis of branched-chain amino acids. Catalyzes the dehydration of (2R,3R)-2,3-dihydroxy-3-methylpentanoate (2,3-dihydroxy-3-methylvalerate) into 2-oxo-3-methylpentanoate (2-oxo-3-methylvalerate) and of (2R)-2,3-dihydroxy-3-methylbutanoate (2,3-dihydroxyisovalerate) into 2-oxo-3-methylbutanoate (2-oxoisovalerate), the penultimate precursor to L-isoleucine and L-valine, respectively. This is Dihydroxy-acid dehydratase from Nostoc sp. (strain PCC 7120 / SAG 25.82 / UTEX 2576).